The primary structure comprises 449 residues: C4-dicarboxylate transport protein 1 (449 aa).

Transmembrane regions (helical) follow at residues 16-38 (FLQV…DLAV), 53-71 (MLIA…SGAG), 84-106 (VIYF…YSLG), 157-176 (ILQV…LVGE), 197-219 (GMIV…ARYG), 229-251 (LVLV…VLRL), 311-333 (GFSI…PLAM), and 358-380 (LVIL…VLVL).

The protein belongs to the dicarboxylate/amino acid:cation symporter (DAACS) (TC 2.A.23) family.

It is found in the cell inner membrane. Its function is as follows. Responsible for the transport of dicarboxylates such as succinate, fumarate, and malate from the periplasm across the membrane. This is C4-dicarboxylate transport protein 1 (dctA1) from Pseudomonas aeruginosa (strain ATCC 15692 / DSM 22644 / CIP 104116 / JCM 14847 / LMG 12228 / 1C / PRS 101 / PAO1).